Reading from the N-terminus, the 113-residue chain is MDFIRMIEEEQMKKDLPAFRPGDTVRVHVKVVEGTRERIQAFEGVVIKMKGGGLRRTFTVRRVTYGVGVERTFPLHSPRIDRIEVIRRGIVRRAKLYYLRELSGKAARIRDRR.

It belongs to the bacterial ribosomal protein bL19 family.

Its function is as follows. This protein is located at the 30S-50S ribosomal subunit interface and may play a role in the structure and function of the aminoacyl-tRNA binding site. In Desulfitobacterium hafniense (strain DSM 10664 / DCB-2), this protein is Large ribosomal subunit protein bL19.